We begin with the raw amino-acid sequence, 186 residues long: Large ribosomal subunit protein eL15 (186 aa).

Positions 163 to 186 (RGLTSAGKKGRGLNKKGKGAEKVR) are disordered. Residues 170 to 179 (KKGRGLNKKG) show a composition bias toward basic residues.

This sequence belongs to the eukaryotic ribosomal protein eL15 family.

The polypeptide is Large ribosomal subunit protein eL15 (Methanosphaera stadtmanae (strain ATCC 43021 / DSM 3091 / JCM 11832 / MCB-3)).